The chain runs to 138 residues: Photosystem II extrinsic protein U (138 aa).

An N-terminal signal peptide occupies residues 1 to 28 (MSRVVSALMGLVLMFGCAFFSVQPQAQA). Residues 29 to 42 (LDLSNGFVSAAVLG) constitute a propeptide that is removed on maturation.

Belongs to the PsbU family. PSII is composed of 1 copy each of membrane proteins PsbA, PsbB, PsbC, PsbD, PsbE, PsbF, PsbH, PsbI, PsbJ, PsbK, PsbL, PsbM, PsbT, PsbX, PsbY, PsbZ, Psb30/Ycf12, peripheral proteins PsbO, CyanoQ (PsbQ), PsbU, PsbV and a large number of cofactors. It forms dimeric complexes.

The protein resides in the cellular thylakoid membrane. In terms of biological role, one of the extrinsic, lumenal subunits of photosystem II (PSII). PSII is a light-driven water plastoquinone oxidoreductase, using light energy to abstract electrons from H(2)O, generating a proton gradient subsequently used for ATP formation. The extrinsic proteins stabilize the structure of photosystem II oxygen-evolving complex (OEC), the ion environment of oxygen evolution and protect the OEC against heat-induced inactivation. This Picosynechococcus sp. (strain ATCC 27264 / PCC 7002 / PR-6) (Agmenellum quadruplicatum) protein is Photosystem II extrinsic protein U.